A 171-amino-acid polypeptide reads, in one-letter code: Ribosome maturation factor RimM (171 aa).

The PRC barrel domain occupies 97-169 (DGEFYYHEII…RVDVDIMEGL (73 aa)).

This sequence belongs to the RimM family. Binds ribosomal protein uS19.

The protein localises to the cytoplasm. Functionally, an accessory protein needed during the final step in the assembly of 30S ribosomal subunit, possibly for assembly of the head region. Essential for efficient processing of 16S rRNA. May be needed both before and after RbfA during the maturation of 16S rRNA. It has affinity for free ribosomal 30S subunits but not for 70S ribosomes. This Lactococcus lactis subsp. cremoris (strain SK11) protein is Ribosome maturation factor RimM.